A 271-amino-acid polypeptide reads, in one-letter code: MMQRYAVGIEFCGIRYRGWQTQQAGVPSIQETIEKVLSKIADEPIILHGAGRTDAGVHATNMVAHFDTNAIRPQRGWLMGANSQLPKDISIQWIKEMNTDFHARFKATARRYRYVVYNTLNRPALLHKQVTHVYQTLDVDKMMLAARKFEGTHNFETFRAASCQSSQPVRHLSHCRLTRHGRYLVLDIQADGFLHHMVRNIMGCLLEIGQGCYEIEHIDTMFAAQDRKAAGVTAPADGLYFIQAYYPEHFELPQHPLGPHWLNLPDEIPNI.

D54 (nucleophile) is an active-site residue. Y112 provides a ligand contact to substrate.

This sequence belongs to the tRNA pseudouridine synthase TruA family. As to quaternary structure, homodimer.

The catalysed reaction is uridine(38/39/40) in tRNA = pseudouridine(38/39/40) in tRNA. Formation of pseudouridine at positions 38, 39 and 40 in the anticodon stem and loop of transfer RNAs. The sequence is that of tRNA pseudouridine synthase A from Acinetobacter baylyi (strain ATCC 33305 / BD413 / ADP1).